The chain runs to 323 residues: Elongation factor P--(R)-beta-lysine ligase (323 aa).

Substrate is bound at residue serine 74–glutamate 76. ATP is bound by residues arginine 98–glutamate 100 and asparagine 107. Tyrosine 116 contacts substrate. Glutamate 242 to leucine 243 serves as a coordination point for ATP. Glutamate 249 is a binding site for substrate. Glycine 298 contacts ATP.

This sequence belongs to the class-II aminoacyl-tRNA synthetase family. EpmA subfamily. Homodimer.

It catalyses the reaction D-beta-lysine + L-lysyl-[protein] + ATP = N(6)-((3R)-3,6-diaminohexanoyl)-L-lysyl-[protein] + AMP + diphosphate + H(+). In terms of biological role, with EpmB is involved in the beta-lysylation step of the post-translational modification of translation elongation factor P (EF-P). Catalyzes the ATP-dependent activation of (R)-beta-lysine produced by EpmB, forming a lysyl-adenylate, from which the beta-lysyl moiety is then transferred to the epsilon-amino group of a conserved specific lysine residue in EF-P. The sequence is that of Elongation factor P--(R)-beta-lysine ligase from Vibrio parahaemolyticus serotype O3:K6 (strain RIMD 2210633).